The sequence spans 390 residues: Anhydro-N-acetylmuramic acid kinase (390 aa).

Gly9 to Asp16 contacts ATP.

It belongs to the anhydro-N-acetylmuramic acid kinase family.

It carries out the reaction 1,6-anhydro-N-acetyl-beta-muramate + ATP + H2O = N-acetyl-D-muramate 6-phosphate + ADP + H(+). It functions in the pathway amino-sugar metabolism; 1,6-anhydro-N-acetylmuramate degradation. It participates in cell wall biogenesis; peptidoglycan recycling. Catalyzes the specific phosphorylation of 1,6-anhydro-N-acetylmuramic acid (anhMurNAc) with the simultaneous cleavage of the 1,6-anhydro ring, generating MurNAc-6-P. Is required for the utilization of anhMurNAc either imported from the medium or derived from its own cell wall murein, and thus plays a role in cell wall recycling. The polypeptide is Anhydro-N-acetylmuramic acid kinase (Bacillus cereus (strain B4264)).